A 414-amino-acid chain; its full sequence is Alanine--glyoxylate aminotransferase (414 aa).

A mitochondrion-targeting transit peptide spans 1–23 (MFRMLAKASVTLGSRAASWVRNM). Position 231 is an N6-(pyridoxal phosphate)lysine (Lys-231). An N6-acetyllysine; alternate modification is found at Lys-247. Lys-247 is subject to N6-succinyllysine; alternate. Residues Lys-256 and Lys-334 each carry the N6-acetyllysine modification. Residue Arg-382 coordinates substrate. Positions 412 to 414 (NKL) match the Microbody targeting signal motif.

The protein belongs to the class-V pyridoxal-phosphate-dependent aminotransferase family. As to quaternary structure, homodimer. The cofactor is pyridoxal 5'-phosphate.

It is found in the peroxisome. The protein resides in the mitochondrion matrix. It carries out the reaction L-serine + pyruvate = 3-hydroxypyruvate + L-alanine. The enzyme catalyses glyoxylate + L-alanine = glycine + pyruvate. Catalyzes the transamination of glyoxylate to glycine and contributes to the glyoxylate detoxification. Its function is as follows. Catalyzes the transamination between L-serine and pyruvate and weakly contributes to gluconeogenesis from the L-serine metabolism. This chain is Alanine--glyoxylate aminotransferase, found in Rattus norvegicus (Rat).